The following is a 346-amino-acid chain: Pyrophosphate--fructose 6-phosphate 1-phosphotransferase (346 aa).

Glycine 13 serves as a coordination point for diphosphate. Glutamate 105 provides a ligand contact to Mg(2+). Substrate-binding positions include 127–129, arginine 164, 171–173, glutamate 224, arginine 269, and 275–278; these read TID, MGR, and HLQR. The active-site Proton acceptor is the aspartate 129.

Belongs to the phosphofructokinase type A (PFKA) family. Mixed-substrate PFK group III subfamily. Homodimer. Mg(2+) is required as a cofactor.

It is found in the cytoplasm. It carries out the reaction beta-D-fructose 6-phosphate + diphosphate = beta-D-fructose 1,6-bisphosphate + phosphate + H(+). Its pathway is carbohydrate degradation; glycolysis; D-glyceraldehyde 3-phosphate and glycerone phosphate from D-glucose: step 3/4. Non-allosteric. Catalyzes the phosphorylation of D-fructose 6-phosphate, the first committing step of glycolysis. Uses inorganic phosphate (PPi) as phosphoryl donor instead of ATP like common ATP-dependent phosphofructokinases (ATP-PFKs), which renders the reaction reversible, and can thus function both in glycolysis and gluconeogenesis. Consistently, PPi-PFK can replace the enzymes of both the forward (ATP-PFK) and reverse (fructose-bisphosphatase (FBPase)) reactions. This is Pyrophosphate--fructose 6-phosphate 1-phosphotransferase from Dictyoglomus thermophilum.